A 609-amino-acid chain; its full sequence is Ovochymase-2 (609 aa).

Positions 1 to 22 are cleaved as a signal peptide; that stretch reads MPISKDKLILILGMVCLEQGHS. A propeptide spans 23–51 (activation peptide); the sequence is ETLSSIRNPDCGQSLVKPQPQNYFSLFSR. In terms of domain architecture, Peptidase S1 spans 52 to 299; that stretch reads IVGGSQVEKG…VLPWILKHIQ (248 aa). A disulfide bridge connects residues C77 and C93. Residue H92 is the Charge relay system of the active site. An N-linked (GlcNAc...) asparagine glycan is attached at N104. E119 contacts Ca(2+). D142 (charge relay system) is an active-site residue. 4 disulfide bridges follow: C176/C246, C207/C225, C236/C265, and C311/C341. Catalysis depends on S240, which acts as the Charge relay system. 2 CUB domains span residues 311–421 and 431–543; these read CSEP…YKAL and CRSL…ISFI. N-linked (GlcNAc...) asparagine glycosylation occurs at N356. A disulfide bridge connects residues C365 and C384. A glycan (N-linked (GlcNAc...) asparagine) is linked at N415. 2 disulfide bridges follow: C431–C458 and C485–C506. Residues N530 and N549 are each glycosylated (N-linked (GlcNAc...) asparagine). The tract at residues 580–609 is disordered; it reads HTKPPYEEDIGEMPAIDSGLLKQGERRGKH.

The protein belongs to the peptidase S1 family. As to expression, only expressed in uterus tissue. Expressed in the initial segment (IS) of the caput epididymis, the region most proximal to the testis.

Its subcellular location is the secreted. Functionally, may be required for sperm ADAM3 processing and consequential sperm fertilizing ability. In vitro, has an endopeptidase activity. The chain is Ovochymase-2 from Mus musculus (Mouse).